The sequence spans 157 residues: Crossover junction endodeoxyribonuclease RuvC (157 aa).

Active-site residues include Asp-7, Glu-66, and Asp-139. Asp-7, Glu-66, and Asp-139 together coordinate Mg(2+).

It belongs to the RuvC family. As to quaternary structure, homodimer which binds Holliday junction (HJ) DNA. The HJ becomes 2-fold symmetrical on binding to RuvC with unstacked arms; it has a different conformation from HJ DNA in complex with RuvA. In the full resolvosome a probable DNA-RuvA(4)-RuvB(12)-RuvC(2) complex forms which resolves the HJ. Mg(2+) is required as a cofactor.

Its subcellular location is the cytoplasm. It catalyses the reaction Endonucleolytic cleavage at a junction such as a reciprocal single-stranded crossover between two homologous DNA duplexes (Holliday junction).. Functionally, the RuvA-RuvB-RuvC complex processes Holliday junction (HJ) DNA during genetic recombination and DNA repair. Endonuclease that resolves HJ intermediates. Cleaves cruciform DNA by making single-stranded nicks across the HJ at symmetrical positions within the homologous arms, yielding a 5'-phosphate and a 3'-hydroxyl group; requires a central core of homology in the junction. The consensus cleavage sequence is 5'-(A/T)TT(C/G)-3'. Cleavage occurs on the 3'-side of the TT dinucleotide at the point of strand exchange. HJ branch migration catalyzed by RuvA-RuvB allows RuvC to scan DNA until it finds its consensus sequence, where it cleaves and resolves the cruciform DNA. This Helicobacter pylori (strain J99 / ATCC 700824) (Campylobacter pylori J99) protein is Crossover junction endodeoxyribonuclease RuvC.